Reading from the N-terminus, the 105-residue chain is Platelet factor 4 (105 aa).

The signal sequence occupies residues 1 to 29; that stretch reads MSAAAVFRGLRPSPELLLLGLLLLPAVVA. Thr31 carries an O-linked (GalNAc...) threonine; partial glycan. Disulfide bonds link Cys44–Cys71 and Cys46–Cys87. The residue at position 61 (Ser61) is a Phosphoserine. 96–102 is a heparin binding site; it reads KKIIKKL.

Belongs to the intercrine alpha (chemokine CxC) family. As to quaternary structure, homotetramer. Interacts with TNFAIP6 (via Link domain). Interacts with CCR1. Interacts with CXCR3. Interacts with THBD; this interaction enhances generation of activated protein C. In terms of processing, O-linked glycan consists of Gal-GalNAc disaccharide which is modified with sialic acid residues (microheterogeneity).

It localises to the secreted. Functionally, chemokine released during platelet aggregation that plays a role in different biological processes including hematopoiesis, cell proliferation, differentiation, and activation. Acts via different functional receptors including CCR1, CXCR3A or CXCR3B. Upon interaction with CXCR3A receptor, induces activated T-lymphocytes migration mediated via downstream Ras/extracellular signal-regulated kinase (ERK) signaling. Neutralizes the anticoagulant effect of heparin by binding more strongly to heparin than to the chondroitin-4-sulfate chains of the carrier molecule. Plays a role in the inhibition of hematopoiesis and in the maintenance of hematopoietic stem cell (HSC) quiescence. Chemotactic for neutrophils and monocytes via CCR1. Inhibits endothelial cell proliferation. In cooperation with toll-like receptor 8/TLR8, induces chromatin remodeling and activates inflammatory gene expression via the TBK1-IRF5 axis. In addition, induces myofibroblast differentiation and collagen synthesis in different precursor cells, including endothelial cells, by stimulating endothelial-to-mesenchymal transition. Interacts with thrombomodulin/THBD to enhance the activation of protein C and thus potentiates its anticoagulant activity. The sequence is that of Platelet factor 4 (Pf4) from Rattus norvegicus (Rat).